Consider the following 156-residue polypeptide: Glycine cleavage system H protein 2, mitochondrial (156 aa).

The N-terminal 23 residues, 1-23 (MACRLFWASRVASHLRISVAQRG), are a transit peptide targeting the mitochondrion. In terms of domain architecture, Lipoyl-binding spans 47 to 129 (KATFGITDHA…YEQGWIIKVE (83 aa)). At Lys-88 the chain carries N6-lipoyllysine. Position 131 is a phosphoserine (Ser-131).

It belongs to the GcvH family. The glycine cleavage system is composed of four proteins: P, T, L and H. (R)-lipoate serves as cofactor.

It is found in the mitochondrion. Its function is as follows. The glycine decarboxylase (GDC) or glycine cleavage system catalyzes the degradation of glycine. The H protein shuttles the methylamine group of glycine from the P protein to the T protein. The chain is Glycine cleavage system H protein 2, mitochondrial (GDH2) from Arabidopsis thaliana (Mouse-ear cress).